We begin with the raw amino-acid sequence, 962 residues long: MTKQTLTQLEQHDLFLRRHIGPDSNQQQAMLNFVGAESLEDLTAQIVPESIRLSQDLSIGDSCGEAEGIAYIRGLADQNQVFKSYIGMGYYGTQVPNVILRNVFENPGWYTAYTPYQPEIAQGRLEAILNFQQVSMDLTGLDLASASLLDEATAAAEAMALAKRVSKAKKANIFFVADDVFPQTLDVVKTRAECFGFEVVVGPASEAVNYELFGALFQYTNRFGQITDFTELFATLRAKNVIVTVAADIMSLVLLKSPGSMGADVVFGSAQRFGVPMGFGGPHAAFFVARDEHKRSMPGRIIGVSKDARGNRALRMAMQTREQHIRREKANSNICTAQILLANMASFYAVFHGPDGLKTIASRINRFADILAAGLQAKGVSLVNSTWFDTISIKGLDVAAVNARALAAEMNLRFDADGTVGVSLDETTLRTDIEALFDVILGAGHGLDVAALDAQIVSQGSQSIPAALVRQDAILSHPTFNRYQSETEMMRYIKRLESKDLALNYSMISLGSCTMKLNAAVEMLPVSWPEFANMHPFSPLDQAKGYTQLIEELSTWLVNITGYDAVCIQPNSGAQGEYAGLLAIKKYHESRGDAHRNICLIPQSAHGTNPASAQLAGMQVVVTACDKQGNVDLDDLKTKAAEVAGNLSCIMITYPSTHGVYEESIREICDIVHQHGGQVYLDGANMNAQVGLTSPGFIGADVSHLNLHKTFAIPHGGGGPGMGPIGVKSHLAPFVAGHVVVKPGRESDHNGAVSAAPYGSAGILPISWMYIKLLGSNGLKKSTQTALLNANYVMKKLSEHYPVLFRGRNDRVAHECIIDLRPLKEASGVTEMDIAKRLNDYGFHAPTMSFPVAGTLMIEPTESESKVELDRFIDAMVSIRAEIAKVESGEWPVDNNPLHNAPHTMADIMDPEFDTRPYSREVAVFPSAAVRTNKFWPTVNRIDDVYGDRNLMCSCAPLSDYE.

Lys709 is modified (N6-(pyridoxal phosphate)lysine).

It belongs to the GcvP family. In terms of assembly, the glycine cleavage system is composed of four proteins: P, T, L and H. Pyridoxal 5'-phosphate is required as a cofactor.

It carries out the reaction N(6)-[(R)-lipoyl]-L-lysyl-[glycine-cleavage complex H protein] + glycine + H(+) = N(6)-[(R)-S(8)-aminomethyldihydrolipoyl]-L-lysyl-[glycine-cleavage complex H protein] + CO2. Its function is as follows. The glycine cleavage system catalyzes the degradation of glycine. The P protein binds the alpha-amino group of glycine through its pyridoxal phosphate cofactor; CO(2) is released and the remaining methylamine moiety is then transferred to the lipoamide cofactor of the H protein. This chain is Glycine dehydrogenase (decarboxylating), found in Shewanella baltica (strain OS155 / ATCC BAA-1091).